A 2289-amino-acid chain; its full sequence is Protein Ycf2 (2289 aa).

1643-1650 (GSIGTGRS) serves as a coordination point for ATP.

This sequence belongs to the Ycf2 family.

The protein resides in the plastid. It is found in the chloroplast stroma. Functionally, probable ATPase of unknown function. Its presence in a non-photosynthetic plant (Epifagus virginiana) and experiments in tobacco indicate that it has an essential function which is probably not related to photosynthesis. This Aethionema grandiflorum (Persian stone-cress) protein is Protein Ycf2.